A 363-amino-acid chain; its full sequence is MHKSINIKNISDDKINLLDLNRKEIEIFLLSLGAKKFVTDQLMKWIYNRHCNNFNLMSNLKKDIRKKLNERSYIFASNFIEEKISYDGTVKWITSIDKQKIETIYIPEKKRATLCVSSQIGCSLKCKFCATGQQGFNRNLKVSEIISQIWQANKILKEKKNNSTITNIVFMGMGEPLLNLNNVISAIKIILDKNGFGLSKRRITLSTSGIVPALNKLIKKIDVSLAISLHAPNDFIRNSIMPINMKYNIKSFLNSVSKYLKHSHANRGGVTVEYVMLRGINDLNEHAEELGNILKKIPSKINLIPWNFFKNANFICSSKNRINIFANILRKKGFNTTIRKNRGQDIGAACGQLTGDIVNRIKN.

Catalysis depends on Glu102, which acts as the Proton acceptor. The Radical SAM core domain maps to 108-349 (EKKRATLCVS…KNRGQDIGAA (242 aa)). The cysteines at positions 115 and 350 are disulfide-linked. Residues Cys122, Cys126, and Cys129 each coordinate [4Fe-4S] cluster. S-adenosyl-L-methionine contacts are provided by residues 174–175 (GE), Ser206, 228–230 (SLH), and Asn307. The active-site S-methylcysteine intermediate is Cys350.

The protein belongs to the radical SAM superfamily. RlmN family. It depends on [4Fe-4S] cluster as a cofactor.

It localises to the cytoplasm. It catalyses the reaction adenosine(2503) in 23S rRNA + 2 reduced [2Fe-2S]-[ferredoxin] + 2 S-adenosyl-L-methionine = 2-methyladenosine(2503) in 23S rRNA + 5'-deoxyadenosine + L-methionine + 2 oxidized [2Fe-2S]-[ferredoxin] + S-adenosyl-L-homocysteine. The enzyme catalyses adenosine(37) in tRNA + 2 reduced [2Fe-2S]-[ferredoxin] + 2 S-adenosyl-L-methionine = 2-methyladenosine(37) in tRNA + 5'-deoxyadenosine + L-methionine + 2 oxidized [2Fe-2S]-[ferredoxin] + S-adenosyl-L-homocysteine. Its function is as follows. Specifically methylates position 2 of adenine 2503 in 23S rRNA and position 2 of adenine 37 in tRNAs. m2A2503 modification seems to play a crucial role in the proofreading step occurring at the peptidyl transferase center and thus would serve to optimize ribosomal fidelity. The polypeptide is Dual-specificity RNA methyltransferase RlmN (Buchnera aphidicola subsp. Schizaphis graminum (strain Sg)).